Here is a 380-residue protein sequence, read N- to C-terminus: Queuine tRNA-ribosyltransferase (380 aa).

Aspartate 95 functions as the Proton acceptor in the catalytic mechanism. Residues 95-99, aspartate 149, glutamine 192, and glycine 219 contribute to the substrate site; that span reads DSGGF. The segment at 250 to 256 is RNA binding; the sequence is GVGSPDA. The active-site Nucleophile is the aspartate 269. The interval 274-278 is RNA binding; important for wobble base 34 recognition; sequence TRIAR. 4 residues coordinate Zn(2+): cysteine 307, cysteine 309, cysteine 312, and histidine 338.

The protein belongs to the queuine tRNA-ribosyltransferase family. As to quaternary structure, homodimer. Within each dimer, one monomer is responsible for RNA recognition and catalysis, while the other monomer binds to the replacement base PreQ1. Requires Zn(2+) as cofactor.

It carries out the reaction 7-aminomethyl-7-carbaguanine + guanosine(34) in tRNA = 7-aminomethyl-7-carbaguanosine(34) in tRNA + guanine. The protein operates within tRNA modification; tRNA-queuosine biosynthesis. In terms of biological role, catalyzes the base-exchange of a guanine (G) residue with the queuine precursor 7-aminomethyl-7-deazaguanine (PreQ1) at position 34 (anticodon wobble position) in tRNAs with GU(N) anticodons (tRNA-Asp, -Asn, -His and -Tyr). Catalysis occurs through a double-displacement mechanism. The nucleophile active site attacks the C1' of nucleotide 34 to detach the guanine base from the RNA, forming a covalent enzyme-RNA intermediate. The proton acceptor active site deprotonates the incoming PreQ1, allowing a nucleophilic attack on the C1' of the ribose to form the product. After dissociation, two additional enzymatic reactions on the tRNA convert PreQ1 to queuine (Q), resulting in the hypermodified nucleoside queuosine (7-(((4,5-cis-dihydroxy-2-cyclopenten-1-yl)amino)methyl)-7-deazaguanosine). The protein is Queuine tRNA-ribosyltransferase of Latilactobacillus sakei subsp. sakei (strain 23K) (Lactobacillus sakei subsp. sakei).